A 155-amino-acid polypeptide reads, in one-letter code: UPF0461 protein C5orf24 homolog (155 aa).

Polar residues predominate over residues 60–69; the sequence is NETHLQTSTS. A disordered region spans residues 60–155; sequence NETHLQTSTS…QQALMCSSDA (96 aa). Residues 78–92 show a composition bias toward basic residues; the sequence is LKKKKNVGRSGKRGR. The segment covering 94-107 has biased composition (polar residues); it reads SGTTKSAGYRTSTG.

Belongs to the UPF0461 family.

The polypeptide is UPF0461 protein C5orf24 homolog (Xenopus laevis (African clawed frog)).